A 255-amino-acid chain; its full sequence is Large ribosomal subunit protein uL4 (255 aa).

The protein belongs to the universal ribosomal protein uL4 family. Part of the 50S ribosomal subunit.

Its function is as follows. One of the primary rRNA binding proteins, this protein initially binds near the 5'-end of the 23S rRNA. It is important during the early stages of 50S assembly. It makes multiple contacts with different domains of the 23S rRNA in the assembled 50S subunit and ribosome. In terms of biological role, forms part of the polypeptide exit tunnel. The sequence is that of Large ribosomal subunit protein uL4 from Pyrococcus abyssi (strain GE5 / Orsay).